Consider the following 132-residue polypeptide: Small ribosomal subunit protein uS8 (132 aa).

Belongs to the universal ribosomal protein uS8 family. Part of the 30S ribosomal subunit. Contacts proteins S5 and S12.

One of the primary rRNA binding proteins, it binds directly to 16S rRNA central domain where it helps coordinate assembly of the platform of the 30S subunit. The chain is Small ribosomal subunit protein uS8 from Bacillus pumilus (strain SAFR-032).